Consider the following 409-residue polypeptide: Fructose-1,6-bisphosphatase, chloroplastic (409 aa).

A chloroplast-targeting transit peptide spans 1–49 (MAAATTTTSRPLLLSRQQAAASSLQCRLPRRPGSSLFAGQGQASTPNVR). Mg(2+)-binding residues include E131, E160, D181, L183, and D184. 184–187 (DGSS) provides a ligand contact to substrate. C223 and C228 are joined by a disulfide. N287, Y319, Y337, Y339, and K349 together coordinate substrate. Residue E355 participates in Mg(2+) binding.

Belongs to the FBPase class 1 family. In terms of assembly, homotetramer. It depends on Mg(2+) as a cofactor. In photosynthetically active tissues, and in the shoot and root apical meristems.

It is found in the plastid. Its subcellular location is the chloroplast. It catalyses the reaction beta-D-fructose 1,6-bisphosphate + H2O = beta-D-fructose 6-phosphate + phosphate. The protein operates within carbohydrate biosynthesis; Calvin cycle. The protein is Fructose-1,6-bisphosphatase, chloroplastic (FBP) of Triticum aestivum (Wheat).